The chain runs to 281 residues: Large ribosomal subunit protein uL2 (281 aa).

The tract at residues 213-281 is disordered; it reads RNRHKGIRPT…LIIRRRKESK (69 aa).

It belongs to the universal ribosomal protein uL2 family. In terms of assembly, part of the 50S ribosomal subunit. Forms a bridge to the 30S subunit in the 70S ribosome.

Functionally, one of the primary rRNA binding proteins. Required for association of the 30S and 50S subunits to form the 70S ribosome, for tRNA binding and peptide bond formation. It has been suggested to have peptidyltransferase activity; this is somewhat controversial. Makes several contacts with the 16S rRNA in the 70S ribosome. The polypeptide is Large ribosomal subunit protein uL2 (Mycoplasmopsis pulmonis (strain UAB CTIP) (Mycoplasma pulmonis)).